A 543-amino-acid polypeptide reads, in one-letter code: CTP synthase (543 aa).

Residues 1-267 form an amidoligase domain region; the sequence is MKQTKYIFVT…LSPIAEILDL (267 aa). Position 15 (Ser15) interacts with CTP. Ser15 lines the UTP pocket. ATP contacts are provided by residues 16 to 21 and Asp73; that span reads SLGKGI. The Mg(2+) site is built by Asp73 and Glu141. CTP is bound by residues 148–150, 188–193, and Lys224; these read DIE and KTKPTQ. Residues 188 to 193 and Lys224 contribute to the UTP site; that span reads KTKPTQ. A Glutamine amidotransferase type-1 domain is found at 292-543; that stretch reads KIAFVGKYVD…IKAAINYEDN (252 aa). Residue Gly354 participates in L-glutamine binding. Cys381 acts as the Nucleophile; for glutamine hydrolysis in catalysis. L-glutamine-binding positions include 382-385, Glu405, and Arg473; that span reads LGMQ. Catalysis depends on residues His516 and Glu518.

This sequence belongs to the CTP synthase family. As to quaternary structure, homotetramer.

It catalyses the reaction UTP + L-glutamine + ATP + H2O = CTP + L-glutamate + ADP + phosphate + 2 H(+). The enzyme catalyses L-glutamine + H2O = L-glutamate + NH4(+). It carries out the reaction UTP + NH4(+) + ATP = CTP + ADP + phosphate + 2 H(+). Its pathway is pyrimidine metabolism; CTP biosynthesis via de novo pathway; CTP from UDP: step 2/2. Its activity is regulated as follows. Allosterically activated by GTP, when glutamine is the substrate; GTP has no effect on the reaction when ammonia is the substrate. The allosteric effector GTP functions by stabilizing the protein conformation that binds the tetrahedral intermediate(s) formed during glutamine hydrolysis. Inhibited by the product CTP, via allosteric rather than competitive inhibition. Catalyzes the ATP-dependent amination of UTP to CTP with either L-glutamine or ammonia as the source of nitrogen. Regulates intracellular CTP levels through interactions with the four ribonucleotide triphosphates. This is CTP synthase from Campylobacter jejuni subsp. jejuni serotype O:23/36 (strain 81-176).